Reading from the N-terminus, the 217-residue chain is Glutathione S-transferase 1 (217 aa).

In terms of domain architecture, GST N-terminal spans 1–83 (MVMTLYKLDA…YLVSKYGADD (83 aa)). Residues S11, 53–55 (HTV), and 67–69 (DSH) each bind glutathione. Residues 89-211 (DPKKRAIVDQ…APGNDLCKDL (123 aa)) enclose the GST C-terminal domain.

Belongs to the GST superfamily. Theta family. In terms of assembly, homodimer.

It catalyses the reaction RX + glutathione = an S-substituted glutathione + a halide anion + H(+). In terms of biological role, conjugation of reduced glutathione to a wide number of exogenous and endogenous hydrophobic electrophiles. This chain is Glutathione S-transferase 1 (GST1), found in Manduca sexta (Tobacco hawkmoth).